A 397-amino-acid chain; its full sequence is Succinyl-diaminopimelate desuccinylase (397 aa).

Residue His-74 participates in Zn(2+) binding. Asp-76 is a catalytic residue. Asp-107 is a binding site for Zn(2+). Glu-141 (proton acceptor) is an active-site residue. Zn(2+) is bound by residues Glu-142, Glu-170, and His-368.

Belongs to the peptidase M20A family. DapE subfamily. Homodimer. Zn(2+) serves as cofactor. Requires Co(2+) as cofactor.

The catalysed reaction is N-succinyl-(2S,6S)-2,6-diaminopimelate + H2O = (2S,6S)-2,6-diaminopimelate + succinate. It functions in the pathway amino-acid biosynthesis; L-lysine biosynthesis via DAP pathway; LL-2,6-diaminopimelate from (S)-tetrahydrodipicolinate (succinylase route): step 3/3. Its function is as follows. Catalyzes the hydrolysis of N-succinyl-L,L-diaminopimelic acid (SDAP), forming succinate and LL-2,6-diaminopimelate (DAP), an intermediate involved in the bacterial biosynthesis of lysine and meso-diaminopimelic acid, an essential component of bacterial cell walls. The sequence is that of Succinyl-diaminopimelate desuccinylase from Mesorhizobium japonicum (strain LMG 29417 / CECT 9101 / MAFF 303099) (Mesorhizobium loti (strain MAFF 303099)).